A 266-amino-acid chain; its full sequence is Glucosamine-6-phosphate deaminase (266 aa).

The active-site Proton acceptor; for enolization step is aspartate 72. Aspartate 141 serves as the catalytic For ring-opening step. Histidine 143 (proton acceptor; for ring-opening step) is an active-site residue. The active-site For ring-opening step is glutamate 148.

This sequence belongs to the glucosamine/galactosamine-6-phosphate isomerase family. NagB subfamily. In terms of assembly, homohexamer.

The enzyme catalyses alpha-D-glucosamine 6-phosphate + H2O = beta-D-fructose 6-phosphate + NH4(+). It functions in the pathway amino-sugar metabolism; N-acetylneuraminate degradation; D-fructose 6-phosphate from N-acetylneuraminate: step 5/5. With respect to regulation, allosterically activated by N-acetylglucosamine 6-phosphate (GlcNAc6P). Its function is as follows. Catalyzes the reversible isomerization-deamination of glucosamine 6-phosphate (GlcN6P) to form fructose 6-phosphate (Fru6P) and ammonium ion. This chain is Glucosamine-6-phosphate deaminase, found in Vibrio vulnificus (strain CMCP6).